Reading from the N-terminus, the 124-residue chain is Small ribosomal subunit protein uS12 (124 aa).

Residues 1 to 42 (MPTTQQLIRKGRKTEEETSDAPALEGSPQRRGVCTRVYTTTP) are disordered. Residue Asp89 is modified to 3-methylthioaspartic acid. Residues 105-124 (AGVEERRQGRSKYGTKKPRE) form a disordered region. Basic residues predominate over residues 113–124 (GRSKYGTKKPRE).

This sequence belongs to the universal ribosomal protein uS12 family. In terms of assembly, part of the 30S ribosomal subunit. Contacts proteins S8 and S17. May interact with IF1 in the 30S initiation complex.

Its function is as follows. With S4 and S5 plays an important role in translational accuracy. In terms of biological role, interacts with and stabilizes bases of the 16S rRNA that are involved in tRNA selection in the A site and with the mRNA backbone. Located at the interface of the 30S and 50S subunits, it traverses the body of the 30S subunit contacting proteins on the other side and probably holding the rRNA structure together. The combined cluster of proteins S8, S12 and S17 appears to hold together the shoulder and platform of the 30S subunit. This Salinibacter ruber (strain DSM 13855 / M31) protein is Small ribosomal subunit protein uS12.